Reading from the N-terminus, the 487-residue chain is Glutamyl-tRNA(Gln) amidotransferase subunit A (487 aa).

Residues Lys-79 and Ser-158 each act as charge relay system in the active site. Ser-182 acts as the Acyl-ester intermediate in catalysis.

This sequence belongs to the amidase family. GatA subfamily. Heterotrimer of A, B and C subunits.

It carries out the reaction L-glutamyl-tRNA(Gln) + L-glutamine + ATP + H2O = L-glutaminyl-tRNA(Gln) + L-glutamate + ADP + phosphate + H(+). Allows the formation of correctly charged Gln-tRNA(Gln) through the transamidation of misacylated Glu-tRNA(Gln) in organisms which lack glutaminyl-tRNA synthetase. The reaction takes place in the presence of glutamine and ATP through an activated gamma-phospho-Glu-tRNA(Gln). In Ehrlichia chaffeensis (strain ATCC CRL-10679 / Arkansas), this protein is Glutamyl-tRNA(Gln) amidotransferase subunit A.